Consider the following 106-residue polypeptide: Large ribosomal subunit protein bL21 (106 aa).

It belongs to the bacterial ribosomal protein bL21 family. As to quaternary structure, part of the 50S ribosomal subunit. Contacts protein L20.

Its function is as follows. This protein binds to 23S rRNA in the presence of protein L20. The sequence is that of Large ribosomal subunit protein bL21 from Xylella fastidiosa (strain Temecula1 / ATCC 700964).